Consider the following 631-residue polypeptide: MPTTFKEIPRERPVTPLLDQADTPHGLRRLGEAELETLADELRLELLYSVGQTGGHFGAGLGVIELTIALHYVFDTPDDRLVWDVGHQAYPHKILTGRRARMSTLRQKDGVAAFPRRSESEYDTFGVGHSSTSISAALGMAIASRLQGSERKSIAVIGDGALTAGMAFEALNHAPEVAANMLVILNDNDMSISRNVGGLSNYLAKILSSRTYTSMREGSKKVLSRLPGAWEIARRTEEYAKGMLVPGTLFEELGWNYIGPIDGHDLPTLIATLRNMRDLKGPQFLHVVTKKGKGFAPAEVDPIGYHAITKLEPLNAPVSVQKKVSSPKYSGVFGQWICDMAEADSRLVGITPAMKEGSDLVDFSERFPERYFDVAIAEQHAVTLAAGMACEGSKPVVAIYSTFLQRGYDQLVHDVAVQNLDVLFAIDRAGLVGEDGPTHAGSFDLSYLRCIPGIVVMTPSDENELRKLLSTGYLHTGPAAVRYPRGTGPNAVIEANLDPVEIGKGVVRRQGQGVAILVFGVQLAEALVVAEKLDATVIDMRFVKPLDEALVRETAASHELLVTLEENAVMGGAGAAVSEFLARANILKSVLHLGLPDVYVEHAKPAQMLAECGLDAEGIEAAINERLALIG.

Residues His87 and Gly128 to Ser130 contribute to the thiamine diphosphate site. Asp159 is a Mg(2+) binding site. Thiamine diphosphate contacts are provided by residues Gly160–Ala161, Asn188, Phe295, and Glu378. Residue Asn188 coordinates Mg(2+).

This sequence belongs to the transketolase family. DXPS subfamily. In terms of assembly, homodimer. Mg(2+) is required as a cofactor. It depends on thiamine diphosphate as a cofactor.

It catalyses the reaction D-glyceraldehyde 3-phosphate + pyruvate + H(+) = 1-deoxy-D-xylulose 5-phosphate + CO2. Its pathway is metabolic intermediate biosynthesis; 1-deoxy-D-xylulose 5-phosphate biosynthesis; 1-deoxy-D-xylulose 5-phosphate from D-glyceraldehyde 3-phosphate and pyruvate: step 1/1. In terms of biological role, catalyzes the acyloin condensation reaction between C atoms 2 and 3 of pyruvate and glyceraldehyde 3-phosphate to yield 1-deoxy-D-xylulose-5-phosphate (DXP). The polypeptide is 1-deoxy-D-xylulose-5-phosphate synthase (Pseudomonas syringae pv. tomato (strain ATCC BAA-871 / DC3000)).